Consider the following 76-residue polypeptide: ATP synthase subunit 9, mitochondrial (76 aa).

At M1 the chain carries N-formylmethionine. 2 consecutive transmembrane segments (helical) span residues 14–34 (IATIGLTGAGIGIAIVFAALI) and 52–72 (ILGFALSEATGLFCLMISFLL).

As to quaternary structure, F-type ATP synthases have 2 components, the catalytic core F(1) and the membrane-embedded component F(0), linked together by a central stalk and a peripheral stalk. The central stalk, also called rotor shaft, is often seen as part of F(1). The peripheral stalk is seen as part of F(0). F(0) contains the membrane channel next to the rotor. F-type ATP synthases form dimers but each monomer functions independently in ATP generation. The dimer consists of 18 different polypeptides: ATP1 (subunit alpha, part of F(1), 3 molecules per monomer), ATP2 (subunit beta, part of F(1), 3 molecules per monomer), ATP3 (subunit gamma, part of the central stalk), ATP4 (subunit b, part of the peripheral stalk), ATP5/OSCP (subunit 5/OSCP, part of the peripheral stalk), ATP6 (subunit a, part of the peripheral stalk), ATP7 (subunit d, part of the peripheral stalk), ATP8 (subunit 8, part of the peripheral stalk), OLI1 (subunit c, part of the rotor, 10 molecules per monomer), ATP14 (subunit h, part of the peripheral stalk), ATP15 (subunit epsilon, part of the central stalk), ATP16 (subunit delta, part of the central stalk), ATP17 (subunit f, part of the peripheral stalk), ATP18 (subunit i/j, part of the peripheral stalk). Dimer-specific subunits are ATP19 (subunit k, at interface between monomers), ATP20 (subunit g, at interface between monomers), TIM11 (subunit e, at interface between monomers). Also contains subunit L.

The protein localises to the mitochondrion inner membrane. Mitochondrial membrane ATP synthase (F(1)F(0) ATP synthase or Complex V) produces ATP from ADP in the presence of a proton gradient across the membrane which is generated by electron transport complexes of the respiratory chain. F-type ATP synthases consist of two structural domains, F(1) - containing the extramembraneous catalytic core, and F(0) - containing the membrane proton channel, linked together by a central stalk and a peripheral stalk. During catalysis, ATP synthesis in the catalytic domain of F(1) is coupled via a rotary mechanism of the central stalk subunits to proton translocation. Part of the complex F(0) domain. A homomeric c-ring of 10 OLI1/ATP9 subunits is part of the complex rotary element. In Pichia angusta (Yeast), this protein is ATP synthase subunit 9, mitochondrial.